The primary structure comprises 319 residues: HPr kinase/phosphorylase (319 aa).

Catalysis depends on residues His-144 and Lys-165. Gly-159–Ser-166 provides a ligand contact to ATP. Ser-166 is a binding site for Mg(2+). Asp-183 acts as the Proton acceptor; for phosphorylation activity. Proton donor; for dephosphorylation activity in catalysis. Residues Met-207 to Asn-216 form an important for the catalytic mechanism of both phosphorylation and dephosphorylation region. Glu-208 is a Mg(2+) binding site. Arg-249 is an active-site residue. Residues Pro-270 to Arg-275 form an important for the catalytic mechanism of dephosphorylation region.

This sequence belongs to the HPrK/P family. As to quaternary structure, homohexamer. Requires Mg(2+) as cofactor.

The enzyme catalyses [HPr protein]-L-serine + ATP = [HPr protein]-O-phospho-L-serine + ADP + H(+). It carries out the reaction [HPr protein]-O-phospho-L-serine + phosphate + H(+) = [HPr protein]-L-serine + diphosphate. Catalyzes the ATP- as well as the pyrophosphate-dependent phosphorylation of a specific serine residue in HPr, a phosphocarrier protein of the phosphoenolpyruvate-dependent sugar phosphotransferase system (PTS). HprK/P also catalyzes the pyrophosphate-producing, inorganic phosphate-dependent dephosphorylation (phosphorolysis) of seryl-phosphorylated HPr (P-Ser-HPr). The chain is HPr kinase/phosphorylase from Geobacter sulfurreducens (strain ATCC 51573 / DSM 12127 / PCA).